A 276-amino-acid chain; its full sequence is Tryptophan synthase alpha chain (276 aa).

Catalysis depends on proton acceptor residues glutamate 55 and aspartate 66.

Belongs to the TrpA family. As to quaternary structure, tetramer of two alpha and two beta chains.

It catalyses the reaction (1S,2R)-1-C-(indol-3-yl)glycerol 3-phosphate + L-serine = D-glyceraldehyde 3-phosphate + L-tryptophan + H2O. It participates in amino-acid biosynthesis; L-tryptophan biosynthesis; L-tryptophan from chorismate: step 5/5. In terms of biological role, the alpha subunit is responsible for the aldol cleavage of indoleglycerol phosphate to indole and glyceraldehyde 3-phosphate. This Gloeobacter violaceus (strain ATCC 29082 / PCC 7421) protein is Tryptophan synthase alpha chain.